The primary structure comprises 66 residues: U8-myrmicitoxin-Tb1a (66 aa).

The N-terminal stretch at 1–26 is a signal peptide; it reads MKLSFLSLAFAVIFVMAIMYAPQVEA. A propeptide spanning residues 27–50 is cleaved from the precursor; the sequence is KASADADADADAAASADALAKASA.

As to expression, expressed by the venom gland.

It localises to the secreted. In terms of biological role, in vivo, this neurotoxin paralyzes about 50% of blowflies (L.caesar) one hour after intrathoracic injection, when tested at high doses (54 nmol/g). In Tetramorium bicarinatum (Tramp ant), this protein is U8-myrmicitoxin-Tb1a.